Consider the following 636-residue polypeptide: Eukaryotic peptide chain release factor GTP-binding subunit ERF3A (636 aa).

Composition is skewed to gly residues over residues 1 to 16 (MDPS…GGGS) and 103 to 116 (AAGG…GAGG). 2 disordered regions span residues 1–54 (MDPS…AAVA) and 90–206 (LRGP…PPGA). Polar residues predominate over residues 121–138 (VESSQDQSCEGSNSTVSM). The span at 183–193 (STQEMMEEEEE) shows a compositional bias: acidic residues. In terms of domain architecture, tr-type G spans 209–435 (KEHVNVVFIG…DNLPNFNRSV (227 aa)). The G1 stretch occupies residues 218–225 (GHVDAGKS). 221-226 (DAGKST) is a binding site for GTP. Residues 274–278 (GKTVE) are G2. Residues 295-298 (DAPG) form a G3 region. GTP is bound by residues 357-360 (NKMD) and 399-401 (SGL). The tract at residues 357–360 (NKMD) is G4. Residues 399 to 401 (SGL) form a G5 region.

Belongs to the TRAFAC class translation factor GTPase superfamily. Classic translation factor GTPase family. ERF3 subfamily. Component of the eRF1-eRF3-GTP ternary complex, composed of ETF1/ERF1 and ERF3 (GSPT1/ERF3A or GSPT2/ERF3B) and GTP. Component of the transient SURF (SMG1-UPF1-eRF1-eRF3) complex. The ETF1-GSPT1 complex interacts with JMJD4. Interacts with PABPC1. Interacts with SHFL.

It carries out the reaction GTP + H2O = GDP + phosphate + H(+). In terms of biological role, GTPase component of the eRF1-eRF3-GTP ternary complex, a ternary complex that mediates translation termination in response to the termination codons UAA, UAG and UGA. GSPT1/ERF3A mediates ETF1/ERF1 delivery to stop codons: The eRF1-eRF3-GTP complex binds to a stop codon in the ribosomal A-site. GTP hydrolysis by GSPT1/ERF3A induces a conformational change that leads to its dissociation, permitting ETF1/ERF1 to accommodate fully in the A-site. Component of the transient SURF complex which recruits UPF1 to stalled ribosomes in the context of nonsense-mediated decay (NMD) of mRNAs containing premature stop codons. Required for SHFL-mediated translation termination which inhibits programmed ribosomal frameshifting (-1PRF) of mRNA from viruses and cellular genes. The sequence is that of Eukaryotic peptide chain release factor GTP-binding subunit ERF3A (Gspt1) from Mus musculus (Mouse).